The sequence spans 583 residues: Torsin-1A-interacting protein 1 (583 aa).

Over residues 1–12 (MAGDGRRAEAVR) the composition is skewed to basic and acidic residues. Disordered stretches follow at residues 1-254 (MAGD…RSSS) and 271-293 (AHDK…WAPQ). The Nuclear portion of the chain corresponds to 1 to 338 (MAGDGRRAEA…NASFVKRNRW (338 aa)). Serine 60 is subject to Phosphoserine. Composition is skewed to basic and acidic residues over residues 74–101 (VAKE…EVRE) and 115–124 (RPQETEEMKT). Phosphoserine occurs at positions 135 and 143. Methionine 146 is subject to Methionine sulfoxide. Phosphoserine is present on residues serine 154, serine 156, and serine 157. Residues 165–174 (QTDLSQTISK) show a composition bias toward polar residues. Phosphoserine is present on residues serine 186 and serine 215. The span at 216–225 (EEGETEEDDQ) shows a compositional bias: acidic residues. Threonine 220 bears the Phosphothreonine mark. Phosphoserine occurs at positions 227, 230, and 242. Basic and acidic residues predominate over residues 238 to 250 (RSRDSDESGDKTT). Over residues 277-287 (SVLSSGYQKTP) the composition is skewed to polar residues. Methionine sulfoxide is present on methionine 301. The residue at position 305 (serine 305) is a Phosphoserine. Lysine 308 is covalently cross-linked (Glycyl lysine isopeptide (Lys-Gly) (interchain with G-Cter in SUMO2)). Phosphoserine is present on residues serine 309 and serine 315. Residues 309-328 (SELGNQSPSTSSRQVTGQPQ) form a disordered region. The helical transmembrane segment at 339 to 355 (WLLPLIAALASGSFWFF) threads the bilayer. Topologically, residues 356 to 583 (STPEVETTAV…ENALKRGICL (228 aa)) are perinuclear space. Residues 356–583 (STPEVETTAV…ENALKRGICL (228 aa)) are interaction with TOR1A. The stretch at 359-435 (EVETTAVQEF…SEQIADAYSS (77 aa)) forms a coiled coil. Asparagine 399 is a glycosylation site (N-linked (GlcNAc...) asparagine). At methionine 552 the chain carries Methionine sulfoxide.

This sequence belongs to the TOR1AIP family. In terms of assembly, interacts with ATP1B4. Interacts with TOR1A (ATP-bound). Interacts with TOR1B, TOR2A and TOR3A. Interacts with VIM. In terms of processing, phosphorylated. Dephosphorylated at Ser-309 and Ser-315 by serine/threonine-protein phosphatase PP1. In terms of tissue distribution, expressed in muscle, liver and kidney. Major isoform present in liver, brain and heart (at protein level). Expressed at lower levels than isoform 4 in lung, kidney and spleen (at protein level). Similar levels of isoforms 1 and 4 are observed in ovary, testis and pancreas (at protein level). As to expression, expressed at higher levels than isoform 1 in lung, kidney and spleen (at protein level). Expressed at lower levels than isoform 1 in liver, brain and heart (at protein level). Similar levels of isoforms 1 and 4 are observed in ovary, testis and pancreas (at protein level).

Its subcellular location is the nucleus inner membrane. The protein localises to the nucleus envelope. It localises to the nucleus. Functionally, required for nuclear membrane integrity. Induces TOR1A and TOR1B ATPase activity and is required for their location on the nuclear membrane. Binds to A- and B-type lamins. Possible role in membrane attachment and assembly of the nuclear lamina. In Homo sapiens (Human), this protein is Torsin-1A-interacting protein 1 (TOR1AIP1).